The sequence spans 468 residues: Two-component response regulator-like APRR9 (468 aa).

Residues 38–156 form the Response regulatory domain; that stretch reads RVLLVESDYS…ELKNLWQHVW (119 aa). 2 stretches are compositionally biased toward polar residues: residues 168-177 and 194-203; these read HAQSLPASQH and DQGSGAQAIN. 3 disordered regions span residues 168–203, 302–416, and 442–468; these read HAQS…QAIN, VVAL…SRSQ, and RKKL…STKS. The segment covering 315–327 has biased composition (basic and acidic residues); the sequence is TPTESHEKLRKVT. Residues 328 to 364 are compositionally biased toward polar residues; the sequence is SDQGSATTSSNQENIGSSSVSFRNQVLQSTVTNQKQD. Basic and acidic residues-rich tracts occupy residues 371–382 and 400–409; these read SNREKAASKEVE and EKPKEEESAK. Positions 417 to 459 constitute a CCT domain; the sequence is REAALMKFRLKRKDRCFDKKVRYQSRKKLAEQRPRVKGQFVRT. Polar residues predominate over residues 458 to 468; sequence RTVNSDASTKS.

This sequence belongs to the ARR-like family. In terms of processing, phosphorylated. Phosphorylation varies throughout the diurnal cycle.

It is found in the nucleus. In terms of biological role, transcriptional repressor of CCA1 and LHY, and positive regulator of LWD1 and LWD2 expression. Controls photoperiodic flowering response and temperature compensation. Involved in the positive and negative feedback loops of the circadian clock. Expression of several members of the ARR-like family is controlled by circadian rhythm. Regulated at the transcriptional level by a corepressor complex consisting of ELF4, ELF3, and LUX. APRR9, APRR7, and APRR5 coordinately act on the upstream region of the target genes to repress their expression from noon until midnight. The particular coordinated sequential expression of APRR9, APRR7, APRR5, APRR3 and APPR1 result to circadian waves that may be at the basis of the endogenous circadian clock. The protein is Two-component response regulator-like APRR9 (APRR9) of Arabidopsis thaliana (Mouse-ear cress).